The primary structure comprises 92 residues: Subtilisin inhibitor 1 (92 aa).

The span at 1 to 12 (QEQGTNPSQEQN) shows a compositional bias: polar residues. Positions 1-31 (QEQGTNPSQEQNVPLPRNYKQALETNTPTKT) are disordered.

Belongs to the protease inhibitor I13 (potato type I serine protease inhibitor) family.

Functionally, inhibitor of subtilisin. This is Subtilisin inhibitor 1 from Phaseolus angularis (Azuki bean).